The chain runs to 173 residues: RNA pyrophosphohydrolase (173 aa).

A Nudix hydrolase domain is found at 6–149 (GFRANVGIII…KRDVYRKVMK (144 aa)). Positions 38–59 (GGVDEGESAEEAMYRELYEEVG) match the Nudix box motif.

Belongs to the Nudix hydrolase family. RppH subfamily. A divalent metal cation serves as cofactor.

Accelerates the degradation of transcripts by removing pyrophosphate from the 5'-end of triphosphorylated RNA, leading to a more labile monophosphorylated state that can stimulate subsequent ribonuclease cleavage. This is RNA pyrophosphohydrolase from Shewanella piezotolerans (strain WP3 / JCM 13877).